The sequence spans 363 residues: S-adenosylmethionine:tRNA ribosyltransferase-isomerase (363 aa).

Belongs to the QueA family. As to quaternary structure, monomer.

The protein localises to the cytoplasm. The catalysed reaction is 7-aminomethyl-7-carbaguanosine(34) in tRNA + S-adenosyl-L-methionine = epoxyqueuosine(34) in tRNA + adenine + L-methionine + 2 H(+). The protein operates within tRNA modification; tRNA-queuosine biosynthesis. Functionally, transfers and isomerizes the ribose moiety from AdoMet to the 7-aminomethyl group of 7-deazaguanine (preQ1-tRNA) to give epoxyqueuosine (oQ-tRNA). The chain is S-adenosylmethionine:tRNA ribosyltransferase-isomerase from Haemophilus influenzae (strain PittGG).